The primary structure comprises 166 residues: Deglycase TK1284 (166 aa).

The PfpI endopeptidase domain maps to Met1–Arg166. Residue His101 is part of the active site.

It belongs to the peptidase C56 family. Homohexamer formed by a dimer of trimers that assemble into a hollow ring structure.

Its subcellular location is the cytoplasm. It catalyses the reaction N(omega)-(1-hydroxy-2-oxopropyl)-L-arginyl-[protein] + H2O = lactate + L-arginyl-[protein] + H(+). The catalysed reaction is N(6)-(1-hydroxy-2-oxopropyl)-L-lysyl-[protein] + H2O = lactate + L-lysyl-[protein] + H(+). The enzyme catalyses S-(1-hydroxy-2-oxopropyl)-L-cysteinyl-[protein] + H2O = lactate + L-cysteinyl-[protein] + H(+). It carries out the reaction N(omega)-(1-hydroxy-2-oxoethyl)-L-arginyl-[protein] + H2O = L-arginyl-[protein] + glycolate + H(+). It catalyses the reaction N(6)-(1-hydroxy-2-oxoethyl)-L-lysyl-[protein] + H2O = glycolate + L-lysyl-[protein] + H(+). The catalysed reaction is S-(1-hydroxy-2-oxoethyl)-L-cysteinyl-[protein] + H2O = glycolate + L-cysteinyl-[protein] + H(+). Deglycase that catalyzes the deglycation of the Maillard adducts formed between amino groups of proteins and reactive carbonyl groups of glyoxals. Thus, functions as a protein deglycase that repairs methylglyoxal- and glyoxal-glycated proteins, and releases repaired proteins and lactate or glycolate, respectively. Deglycates cysteine, arginine and lysine residues in proteins, and thus reactivates these proteins by reversing glycation by glyoxals. Acts on early glycation intermediates (hemithioacetals and aminocarbinols), preventing the formation of advanced glycation endproducts (AGE) that cause irreversible damage. Also displays proteolytic activity. This is Deglycase TK1284 from Thermococcus kodakarensis (strain ATCC BAA-918 / JCM 12380 / KOD1) (Pyrococcus kodakaraensis (strain KOD1)).